The chain runs to 400 residues: Snake venom metalloproteinase H2 (400 aa).

The N-terminal stretch at phenylalanine 1–serine 6 is a signal peptide. A propeptide spanning residues serine 7 to threonine 176 is cleaved from the precursor. Residues arginine 180 to proline 377 enclose the Peptidase M12B domain. 2 residues coordinate Ca(2+): glutamate 183 and aspartate 267. 3 disulfides stabilise this stretch: cysteine 291–cysteine 372, cysteine 331–cysteine 356, and cysteine 333–cysteine 339. A Zn(2+)-binding site is contributed by histidine 316. Glutamate 317 is a catalytic residue. Histidine 320 and histidine 326 together coordinate Zn(2+). 7 residues coordinate Ca(2+): cysteine 372, asparagine 375, valine 387, asparagine 390, leucine 392, glutamate 394, and aspartate 400. A propeptide spanning residues leucine 378–aspartate 400 is cleaved from the precursor.

The protein belongs to the venom metalloproteinase (M12B) family. P-I subfamily. As to quaternary structure, monomer. Zn(2+) serves as cofactor. Expressed by the venom gland.

The protein localises to the secreted. Functionally, snake venom metalloproteinase that impairs hemostasis in the envenomed animal. This chain is Snake venom metalloproteinase H2, found in Deinagkistrodon acutus (Hundred-pace snake).